We begin with the raw amino-acid sequence, 287 residues long: Acetylglutamate kinase (287 aa).

Residues 70 to 71 (GG), R92, and N184 each bind substrate.

This sequence belongs to the acetylglutamate kinase family. ArgB subfamily.

The protein localises to the cytoplasm. The enzyme catalyses N-acetyl-L-glutamate + ATP = N-acetyl-L-glutamyl 5-phosphate + ADP. Its pathway is amino-acid biosynthesis; L-arginine biosynthesis; N(2)-acetyl-L-ornithine from L-glutamate: step 2/4. Functionally, catalyzes the ATP-dependent phosphorylation of N-acetyl-L-glutamate. The polypeptide is Acetylglutamate kinase (Roseobacter denitrificans (strain ATCC 33942 / OCh 114) (Erythrobacter sp. (strain OCh 114))).